A 438-amino-acid chain; its full sequence is Aspartate--tRNA(Asp) ligase (438 aa).

Glu-170 lines the L-aspartate pocket. Residues 192 to 195 (QLYK) are aspartate. Arg-214 provides a ligand contact to L-aspartate. Residues 214 to 216 (RAE), 222 to 224 (RHL), and Glu-361 contribute to the ATP site. Residues Glu-361 and Ser-364 each coordinate Mg(2+). L-aspartate is bound by residues Ser-364 and Arg-368. 409–412 (GAER) provides a ligand contact to ATP.

It belongs to the class-II aminoacyl-tRNA synthetase family. Type 2 subfamily. As to quaternary structure, homodimer. The cofactor is Mg(2+).

The protein localises to the cytoplasm. It catalyses the reaction tRNA(Asp) + L-aspartate + ATP = L-aspartyl-tRNA(Asp) + AMP + diphosphate. Functionally, catalyzes the attachment of L-aspartate to tRNA(Asp) in a two-step reaction: L-aspartate is first activated by ATP to form Asp-AMP and then transferred to the acceptor end of tRNA(Asp). The polypeptide is Aspartate--tRNA(Asp) ligase (Pyrococcus furiosus (strain ATCC 43587 / DSM 3638 / JCM 8422 / Vc1)).